We begin with the raw amino-acid sequence, 385 residues long: Succinate--CoA ligase [ADP-forming] subunit beta (385 aa).

In terms of domain architecture, ATP-grasp spans 9–237; the sequence is KEILRQFGVN…LEAEHPLEIE (229 aa). ATP-binding positions include Lys45, 52–54, Val94, and Glu101; that span reads GRG. Asn192 and Asp206 together coordinate Mg(2+). Residues Asn257 and 314 to 316 each bind substrate; that span reads GIT.

This sequence belongs to the succinate/malate CoA ligase beta subunit family. In terms of assembly, heterotetramer of two alpha and two beta subunits. Requires Mg(2+) as cofactor.

The catalysed reaction is succinate + ATP + CoA = succinyl-CoA + ADP + phosphate. It carries out the reaction GTP + succinate + CoA = succinyl-CoA + GDP + phosphate. Its pathway is carbohydrate metabolism; tricarboxylic acid cycle; succinate from succinyl-CoA (ligase route): step 1/1. Succinyl-CoA synthetase functions in the citric acid cycle (TCA), coupling the hydrolysis of succinyl-CoA to the synthesis of either ATP or GTP and thus represents the only step of substrate-level phosphorylation in the TCA. The beta subunit provides nucleotide specificity of the enzyme and binds the substrate succinate, while the binding sites for coenzyme A and phosphate are found in the alpha subunit. The chain is Succinate--CoA ligase [ADP-forming] subunit beta from Deinococcus deserti (strain DSM 17065 / CIP 109153 / LMG 22923 / VCD115).